Consider the following 588-residue polypeptide: MMRTHYCGALNRDNIGQEVTLSGWVHRRRDLGGLIFIDMRDREGIVQVCFDPVYQEALTTAASLRNEFCIQIKGEVIARPDNQINKNMATGEVEVLAKSLSIYNSAEPLPLDFNQNNTEEQRLKYRYLDLRRPEMAQRLKTRAKITSFVRRFMDEHGFLDIETPMLTKATPEGARDYLVPSRVHKGKFYALPQSPQLFKQLLMMSGFDRYYQIVKCFRDEDLRADRQPEFTQIDVETSFLTAPEVREIMEKMVHGLWRETLGVDLGKFPVMTFAEAMRRFGSDKPDLRNPLEMVDVADLLKEVEFKVFNGPANDPNGRIAVIRVPNGTDITRKQIDEYTQFVGIYGAKGLAWLKVNDLAAGMDGVQSPIAKFLSEAVLKALLERVQAQNGDILFFGADNYKVTTDAMGALRLKLGRDLGLTKLEEWQPLWVIDFPMFERDDEGDLAAMHHPFTSPKDFSPEQLEADPTSAVANAYDMVINGYEVGGGSVRIFDPKMQQTVFRILGINEAEQREKFGFLLDALKFGTPPHAGLAFGLDRLTMLLTGTDNIRDVIAFPKTTAAACLMTEAPSFANPQALNELSVQVIKSE.

Glu172 serves as a coordination point for L-aspartate. The aspartate stretch occupies residues 196–199 (QLFK). Residue Arg218 coordinates L-aspartate. Residues 218–220 (RDE) and Gln227 each bind ATP. His449 lines the L-aspartate pocket. Glu483 lines the ATP pocket. Position 490 (Arg490) interacts with L-aspartate. 535–538 (GLDR) contributes to the ATP binding site.

This sequence belongs to the class-II aminoacyl-tRNA synthetase family. Type 1 subfamily. In terms of assembly, homodimer.

It localises to the cytoplasm. The catalysed reaction is tRNA(Asp) + L-aspartate + ATP = L-aspartyl-tRNA(Asp) + AMP + diphosphate. Functionally, catalyzes the attachment of L-aspartate to tRNA(Asp) in a two-step reaction: L-aspartate is first activated by ATP to form Asp-AMP and then transferred to the acceptor end of tRNA(Asp). The sequence is that of Aspartate--tRNA ligase from Pasteurella multocida (strain Pm70).